The following is a 150-amino-acid chain: Troponin C, isotype gamma (150 aa).

An N-acetylmethionine modification is found at M1. EF-hand domains are found at residues 7–42, 43–78, 83–118, and 119–150; these read EQLSALKKAFDSFDTDSKGFITPETVGVILRMMGVK, ISEKNLQQVIAETDEDGSGELEFEEFVELAAKFLIE, ALKAELKEAFRIYDKGGDGYITTDVLREILRELDNR, and LTEDDLDGIIEEVDEDGSGTLDFDEFMEMMSG. Ca(2+) contacts are provided by D56, D58, S60, E62, and E67. Residues D132, D134, S136, T138, and E143 each coordinate Ca(2+).

This sequence belongs to the troponin C family.

Troponin is the central regulatory protein of striated muscle contraction. Tn consists of three components: Tn-I which is the inhibitor of actomyosin ATPase, Tn-T which contains the binding site for tropomyosin and Tn-C. The binding of calcium to Tn-C abolishes the inhibitory action of Tn on actin filaments. This is Troponin C, isotype gamma from Astacus leptodactylus (Turkish narrow-clawed crayfish).